The following is a 969-amino-acid chain: Rab3 GTPase-activating protein catalytic subunit (969 aa).

Residues 532 to 549 (DDGKKSSSSDGARDRSRG) show a composition bias toward basic and acidic residues. Residues 532–613 (DDGKKSSSSD…PEGRLQPHGT (82 aa)) are disordered. Over residues 550–572 (APEGAGPEGAGPAEAAGKSWDSW) the composition is skewed to low complexity. Residues 573-589 (SDSEDEFFECVSDTEEM) are compositionally biased toward acidic residues. Over residues 590–608 (KEDKEEAENRSRSKPEGRL) the composition is skewed to basic and acidic residues.

The protein belongs to the Rab3-GAP catalytic subunit family. In terms of assembly, the Rab3 GTPase-activating complex is a heterodimer composed of rab3gap1 and rab3gap2. The Rab3 GTPase-activating complex interacts with DMXL2. Interacts with LMAN1.

Its subcellular location is the cytoplasm. It is found in the endoplasmic reticulum. It localises to the golgi apparatus. The protein localises to the cis-Golgi network. In terms of biological role, catalytic subunit of the Rab3 GTPase-activating (Rab3GAP) complex composed of rab3gap1 and rab3gap2, which has GTPase-activating protein (GAP) activity towards various Rab3 subfamily members (RAB3A, RAB3B, RAB3C and RAB3D), RAB5A and RAB43, and guanine nucleotide exchange factor (GEF) activity towards RAB18. As part of the Rab3GAP complex, acts as a GAP for Rab3 proteins by converting active RAB3-GTP to the inactive form RAB3-GDP. Rab3 proteins are involved in regulated exocytosis of neurotransmitters and hormones. The Rab3GAP complex, acts as a GEF for RAB18 by promoting the conversion of inactive RAB18-GDP to the active form RAB18-GTP. Recruits and stabilizes RAB18 at the cis-Golgi membrane where RAB18 is most likely activated. Also involved in RAB18 recruitment at the endoplasmic reticulum (ER) membrane where it maintains proper ER structure. Required for normal eye and brain development. May participate in neurodevelopmental processes such as proliferation, migration and differentiation before synapse formation, and non-synaptic vesicular release of neurotransmitters. The polypeptide is Rab3 GTPase-activating protein catalytic subunit (rab3gap1) (Danio rerio (Zebrafish)).